The chain runs to 46 residues: Endochitinase 2 (46 aa).

It belongs to the glycosyl hydrolase 19 family. Chitinase class I subfamily.

It carries out the reaction Random endo-hydrolysis of N-acetyl-beta-D-glucosaminide (1-&gt;4)-beta-linkages in chitin and chitodextrins.. Functionally, defense against chitin-containing fungal and bacterial pathogens. This Arachis hypogaea (Peanut) protein is Endochitinase 2.